A 209-amino-acid polypeptide reads, in one-letter code: Uracil phosphoribosyltransferase (209 aa).

5-phospho-alpha-D-ribose 1-diphosphate contacts are provided by residues Arg-79, Arg-104, and 131-139 (DPMLATGGS). Residues Ile-194 and 199 to 201 (GDA) each bind uracil. Residue Asp-200 coordinates 5-phospho-alpha-D-ribose 1-diphosphate.

It belongs to the UPRTase family. Requires Mg(2+) as cofactor.

It catalyses the reaction UMP + diphosphate = 5-phospho-alpha-D-ribose 1-diphosphate + uracil. Its pathway is pyrimidine metabolism; UMP biosynthesis via salvage pathway; UMP from uracil: step 1/1. Its activity is regulated as follows. Allosterically activated by GTP. In terms of biological role, catalyzes the conversion of uracil and 5-phospho-alpha-D-ribose 1-diphosphate (PRPP) to UMP and diphosphate. This Pediococcus pentosaceus (strain ATCC 25745 / CCUG 21536 / LMG 10740 / 183-1w) protein is Uracil phosphoribosyltransferase.